A 289-amino-acid polypeptide reads, in one-letter code: Diaminopimelate epimerase (289 aa).

The substrate site is built by N11 and N78. The active-site Proton donor is the C87. Substrate is bound by residues 88–89, N163, N199, and 217–218; these read GN and ER. The Proton acceptor role is filled by C226. Residue 227–228 coordinates substrate; sequence GT.

Belongs to the diaminopimelate epimerase family. Homodimer.

It localises to the cytoplasm. The catalysed reaction is (2S,6S)-2,6-diaminopimelate = meso-2,6-diaminopimelate. Its pathway is amino-acid biosynthesis; L-lysine biosynthesis via DAP pathway; DL-2,6-diaminopimelate from LL-2,6-diaminopimelate: step 1/1. Functionally, catalyzes the stereoinversion of LL-2,6-diaminopimelate (L,L-DAP) to meso-diaminopimelate (meso-DAP), a precursor of L-lysine and an essential component of the bacterial peptidoglycan. This chain is Diaminopimelate epimerase, found in Mycobacterium bovis (strain ATCC BAA-935 / AF2122/97).